The sequence spans 310 residues: Protein translocase subunit SecF (310 aa).

6 helical membrane passes run 18–38 (FFTI…YRGG), 135–155 (QAVY…AFRF), 162–182 (IVSV…VILA), 188–208 (ITIV…TIVL), 240–260 (IVTS…GGEV), and 267–287 (IMII…APLI).

It belongs to the SecD/SecF family. SecF subfamily. As to quaternary structure, forms a complex with SecD. Part of the essential Sec protein translocation apparatus which comprises SecA, SecYEG and auxiliary proteins SecDF. Other proteins may also be involved.

It localises to the cell inner membrane. Part of the Sec protein translocase complex. Interacts with the SecYEG preprotein conducting channel. SecDF uses the proton motive force (PMF) to complete protein translocation after the ATP-dependent function of SecA. This is Protein translocase subunit SecF from Endomicrobium trichonymphae.